Reading from the N-terminus, the 534-residue chain is Arginine transporter 1 (534 aa).

The next 6 membrane-spanning stretches (helical) occupy residues 35–55 (YVLL…YFGW), 99–119 (SLFT…GYLL), 126–146 (AVAL…AFSG), 154–174 (PAFV…LLIV), 182–202 (ALIM…PLVL), and 216–236 (VCIG…FFFI). The N-linked (GlcNAc...) asparagine glycan is linked to asparagine 246. The interval 261-302 (TAQSSPKAVDSPPCDEGASSRGRLAVSHNTERTAPDDEQEKD) is disordered. The span at 289 to 302 (NTERTAPDDEQEKD) shows a compositional bias: basic and acidic residues. 6 consecutive transmembrane segments (helical) span residues 329–349 (AFTF…WVMA), 365–385 (YTLE…GVVI), 388–408 (IGIM…YVCV), 419–439 (FSVI…YVFV), 451–471 (LIGV…VLYG), and 483–503 (RPVV…LLAM).

It belongs to the SLC43A transporter (TC 2.A.1.44) family.

It localises to the cell membrane. It catalyses the reaction L-arginine(in) = L-arginine(out). Functionally, selective L-arginine transporter that is essential for parasite survival and virulence. Does not require other inorganic ions such as sodium, chloride, potassium or calcium. The polypeptide is Arginine transporter 1 (Toxoplasma gondii (strain ATCC 50611 / Me49)).